A 64-amino-acid polypeptide reads, in one-letter code: Ferredoxin-2 (64 aa).

The 4Fe-4S ferredoxin-type domain maps to 2-29 (RIHVDQDKCCGAGSCVLAAPDVFDQREE). Positions 10, 16, and 55 each coordinate [3Fe-4S] cluster.

The cofactor is [3Fe-4S] cluster.

Its function is as follows. Electron transport protein for the cytochrome P-450-SU2 system. The protein is Ferredoxin-2 (subB) of Streptomyces griseolus.